A 327-amino-acid polypeptide reads, in one-letter code: Ribonucleoside-diphosphate reductase small chain (327 aa).

The Fe cation site is built by Asp-70, Glu-101, and His-104. Tyr-108 is a catalytic residue. Residues Glu-164, Glu-198, and His-201 each coordinate Fe cation.

This sequence belongs to the ribonucleoside diphosphate reductase small chain family. As to quaternary structure, heterotetramer composed of a homodimer of the large subunit (R1) and a homodimer of the small subunit (R2). Larger multisubunit protein complex are also active, composed of (R1)n(R2)n. It depends on Fe cation as a cofactor.

The enzyme catalyses a 2'-deoxyribonucleoside 5'-diphosphate + [thioredoxin]-disulfide + H2O = a ribonucleoside 5'-diphosphate + [thioredoxin]-dithiol. Functionally, ribonucleoside-diphosphate reductase holoenzyme provides the precursors necessary for viral DNA synthesis. Allows virus growth in non-dividing cells. Catalyzes the biosynthesis of deoxyribonucleotides from the corresponding ribonucleotides. The polypeptide is Ribonucleoside-diphosphate reductase small chain (Ornithodoros (relapsing fever ticks)).